Reading from the N-terminus, the 490-residue chain is UDP-glucosyl transferase 73M2 (490 aa).

Histidine 20 functions as the Proton acceptor in the catalytic mechanism. Aspartate 124 acts as the Charge relay in catalysis. Residues serine 297, tryptophan 353, alanine 354, histidine 371, asparagine 375, serine 376, glutamate 379, and tyrosine 393 each coordinate UDP.

Belongs to the UDP-glycosyltransferase family. In terms of tissue distribution, mainly expressed in flowers, flower buds and young leaves, and, to a lesser extent, in old leaves, stems and roots.

The protein operates within secondary metabolite biosynthesis; terpenoid biosynthesis. In terms of biological role, component of the oleanane-type triterpene saponins (e.g. saponarioside A and saponarioside B) biosynthetic pathway, leading to the production of natural products with detergent properties used as traditional sources of soap. A glycosyltransferase that mediates the conversion of QA-triFRX to QA-triFRXX via the elongation of the C-28 sugar chain with a D-xylose. The chain is UDP-glucosyl transferase 73M2 from Saponaria officinalis (Common soapwort).